The following is a 240-amino-acid chain: UDP-2,3-diacylglucosamine hydrolase (240 aa).

Residues D7, H9, D40, N78, and H113 each contribute to the Mn(2+) site. Position 78–79 (78–79 (NR)) interacts with substrate. Substrate contacts are provided by D121, S159, T163, K166, and H194. Residues H194 and H196 each contribute to the Mn(2+) site.

The protein belongs to the LpxH family. Mn(2+) serves as cofactor.

It is found in the cell inner membrane. The catalysed reaction is UDP-2-N,3-O-bis[(3R)-3-hydroxytetradecanoyl]-alpha-D-glucosamine + H2O = 2-N,3-O-bis[(3R)-3-hydroxytetradecanoyl]-alpha-D-glucosaminyl 1-phosphate + UMP + 2 H(+). The protein operates within glycolipid biosynthesis; lipid IV(A) biosynthesis; lipid IV(A) from (3R)-3-hydroxytetradecanoyl-[acyl-carrier-protein] and UDP-N-acetyl-alpha-D-glucosamine: step 4/6. Functionally, hydrolyzes the pyrophosphate bond of UDP-2,3-diacylglucosamine to yield 2,3-diacylglucosamine 1-phosphate (lipid X) and UMP by catalyzing the attack of water at the alpha-P atom. Involved in the biosynthesis of lipid A, a phosphorylated glycolipid that anchors the lipopolysaccharide to the outer membrane of the cell. The protein is UDP-2,3-diacylglucosamine hydrolase of Pseudomonas putida (strain W619).